Reading from the N-terminus, the 341-residue chain is Ribosomal RNA small subunit methyltransferase H (341 aa).

S-adenosyl-L-methionine-binding positions include 47–49 (GGY), aspartate 64, phenylalanine 91, aspartate 109, and glutamine 116.

Belongs to the methyltransferase superfamily. RsmH family.

The protein resides in the cytoplasm. It carries out the reaction cytidine(1402) in 16S rRNA + S-adenosyl-L-methionine = N(4)-methylcytidine(1402) in 16S rRNA + S-adenosyl-L-homocysteine + H(+). Specifically methylates the N4 position of cytidine in position 1402 (C1402) of 16S rRNA. The polypeptide is Ribosomal RNA small subunit methyltransferase H (Rhizobium johnstonii (strain DSM 114642 / LMG 32736 / 3841) (Rhizobium leguminosarum bv. viciae)).